The primary structure comprises 312 residues: Transcription initiation factor IIB 1 (312 aa).

The segment at 12-43 (EIERCPECGSTNLIRDYEHGELVCGECGAVIE) adopts a TFIIB-type zinc-finger fold. Cysteine 16, cysteine 19, cysteine 35, and cysteine 38 together coordinate Zn(2+). Tandem repeats lie at residues 129–212 (QELE…SRYL) and 223–304 (DYIS…ELTE).

It belongs to the TFIIB family.

In terms of biological role, stabilizes TBP binding to an archaeal box-A promoter. Also responsible for recruiting RNA polymerase II to the pre-initiation complex (DNA-TBP-TFIIB). This Thermoplasma volcanium (strain ATCC 51530 / DSM 4299 / JCM 9571 / NBRC 15438 / GSS1) protein is Transcription initiation factor IIB 1.